A 273-amino-acid polypeptide reads, in one-letter code: 2,3,4,5-tetrahydropyridine-2,6-dicarboxylate N-succinyltransferase (273 aa).

Residues Arg-105 and Asp-142 each coordinate substrate.

Belongs to the transferase hexapeptide repeat family. In terms of assembly, homotrimer.

The protein localises to the cytoplasm. The catalysed reaction is (S)-2,3,4,5-tetrahydrodipicolinate + succinyl-CoA + H2O = (S)-2-succinylamino-6-oxoheptanedioate + CoA. It participates in amino-acid biosynthesis; L-lysine biosynthesis via DAP pathway; LL-2,6-diaminopimelate from (S)-tetrahydrodipicolinate (succinylase route): step 1/3. This is 2,3,4,5-tetrahydropyridine-2,6-dicarboxylate N-succinyltransferase from Bordetella bronchiseptica (strain ATCC BAA-588 / NCTC 13252 / RB50) (Alcaligenes bronchisepticus).